The primary structure comprises 191 residues: Shikimate kinase (191 aa).

24–29 (GSGKTS) provides a ligand contact to ATP. A Mg(2+)-binding site is contributed by threonine 28. Residues aspartate 46, arginine 70, and glycine 92 each coordinate substrate. Arginine 130 is a binding site for ATP. Arginine 149 is a substrate binding site.

Belongs to the shikimate kinase family. Monomer. The cofactor is Mg(2+).

The protein resides in the cytoplasm. The catalysed reaction is shikimate + ATP = 3-phosphoshikimate + ADP + H(+). Its pathway is metabolic intermediate biosynthesis; chorismate biosynthesis; chorismate from D-erythrose 4-phosphate and phosphoenolpyruvate: step 5/7. Its function is as follows. Catalyzes the specific phosphorylation of the 3-hydroxyl group of shikimic acid using ATP as a cosubstrate. The sequence is that of Shikimate kinase from Parasynechococcus marenigrum (strain WH8102).